The chain runs to 273 residues: tRNA (guanine-N(7)-)-methyltransferase A (273 aa).

Residues Gly86, Glu109, Arg111, Asn142, Ala143, and Leu162 each coordinate S-adenosyl-L-methionine. The active site involves Asp165. The alphaC helix stretch occupies residues 166 to 174; it reads PHFKKTKHK. S-adenosyl-L-methionine-binding residues include Thr240 and Glu242. The interval 240 to 248 is alpha6 helix; sequence TEEGKKVQR.

The protein belongs to the class I-like SAM-binding methyltransferase superfamily. TrmB family. As to quaternary structure, catalytic component of the METTL1-WDR4 complex, composed of mettl1 and wdr4.

Its subcellular location is the nucleus. It carries out the reaction guanosine(46) in tRNA + S-adenosyl-L-methionine = N(7)-methylguanosine(46) in tRNA + S-adenosyl-L-homocysteine. The enzyme catalyses a guanosine in mRNA + S-adenosyl-L-methionine = an N(7)-methylguanosine in mRNA + S-adenosyl-L-homocysteine. It catalyses the reaction a guanosine in miRNA + S-adenosyl-L-methionine = an N(7)-methylguanosine in miRNA + S-adenosyl-L-homocysteine. The protein operates within tRNA modification; N(7)-methylguanine-tRNA biosynthesis. Its function is as follows. Catalytic component of METTL1-WDR4 methyltransferase complex that mediates the formation of N(7)-methylguanine in a subset of RNA species, such as tRNAs, mRNAs and microRNAs (miRNAs). Catalyzes the formation of N(7)-methylguanine at position 46 (m7G46) in a large subset of tRNAs that contain the 5'-RAGGU-3' motif within the variable loop. M7G46 interacts with C13-G22 in the D-loop to stabilize tRNA tertiary structure and protect tRNAs from decay. Also acts as a methyltransferase for a subset of internal N(7)-methylguanine in mRNAs. Internal N(7)-methylguanine methylation of mRNAs in response to stress promotes their relocalization to stress granules, thereby suppressing their translation. Also methylates a specific subset of miRNAs. This Xenopus tropicalis (Western clawed frog) protein is tRNA (guanine-N(7)-)-methyltransferase A (mettl1-A).